Reading from the N-terminus, the 610-residue chain is Elongation factor 4 (610 aa).

The 183-residue stretch at 12 to 194 (EKIRNFSIIA…QIVEKVPAPQ (183 aa)) folds into the tr-type G domain. Residues 24–29 (DHGKST) and 141–144 (NKID) each bind GTP.

The protein belongs to the TRAFAC class translation factor GTPase superfamily. Classic translation factor GTPase family. LepA subfamily.

It is found in the cell membrane. It catalyses the reaction GTP + H2O = GDP + phosphate + H(+). In terms of biological role, required for accurate and efficient protein synthesis under certain stress conditions. May act as a fidelity factor of the translation reaction, by catalyzing a one-codon backward translocation of tRNAs on improperly translocated ribosomes. Back-translocation proceeds from a post-translocation (POST) complex to a pre-translocation (PRE) complex, thus giving elongation factor G a second chance to translocate the tRNAs correctly. Binds to ribosomes in a GTP-dependent manner. This chain is Elongation factor 4, found in Streptococcus thermophilus (strain ATCC BAA-250 / LMG 18311).